The sequence spans 200 residues: Transcription factor FapR (200 aa).

Belongs to the FapR family.

In terms of biological role, transcriptional factor involved in regulation of membrane lipid biosynthesis by repressing genes involved in fatty acid and phospholipid metabolism. In Thermoanaerobacter pseudethanolicus (strain ATCC 33223 / 39E) (Clostridium thermohydrosulfuricum), this protein is Transcription factor FapR.